The following is a 174-amino-acid chain: Type II restriction enzyme Bsp6I (174 aa).

The catalysed reaction is Endonucleolytic cleavage of DNA to give specific double-stranded fragments with terminal 5'-phosphates.. In terms of biological role, a P subtype restriction enzyme that recognizes the double-stranded sequence 5'-GCNGC-3' and cleaves after C-2. This chain is Type II restriction enzyme Bsp6I, found in Bacillus sp. (strain RFL6).